We begin with the raw amino-acid sequence, 416 residues long: Phosphoglycerate kinase (416 aa).

Residues 24–26, Arg-40, 63–66, Arg-122, and Arg-162 contribute to the substrate site; these read DLN and HLGR. ATP-binding positions include Lys-212, Gly-300, Glu-331, and 360–363; that span reads GGDS.

Belongs to the phosphoglycerate kinase family. Monomer.

The protein resides in the cytoplasm. The catalysed reaction is (2R)-3-phosphoglycerate + ATP = (2R)-3-phospho-glyceroyl phosphate + ADP. It participates in carbohydrate degradation; glycolysis; pyruvate from D-glyceraldehyde 3-phosphate: step 2/5. This chain is Phosphoglycerate kinase, found in Mycobacterium ulcerans (strain Agy99).